We begin with the raw amino-acid sequence, 1412 residues long: uncharacterized protein (1412 aa).

Residues 1-22 (MESINVVNSVEDLPGFNPDENV) form a disordered region. Coiled-coil stretches lie at residues 317 to 377 (NNDF…ILRH) and 732 to 800 (SKEA…SDDE). A disordered region spans residues 778–808 (SRKRKHEDIVKEHEAEKRDSDDEDDFEEVDV). Basic and acidic residues predominate over residues 783-797 (HEDIVKEHEAEKRDS). Acidic residues predominate over residues 798–808 (DDEDDFEEVDV).

This is an uncharacterized protein from Magallana gigas (Pacific oyster).